A 30-amino-acid polypeptide reads, in one-letter code: Cycloviolacin-O4 (30 aa).

Residues glycine 1 to asparagine 30 constitute a cross-link (cyclopeptide (Gly-Asn)). Intrachain disulfides connect cysteine 4/cysteine 20, cysteine 8/cysteine 22, and cysteine 13/cysteine 27.

Post-translationally, this is a cyclic peptide. In terms of tissue distribution, expressed in petals, petioles, roots and runners but not in leaves (at protein level).

Functionally, probably participates in a plant defense mechanism. The protein is Cycloviolacin-O4 of Viola odorata (Sweet violet).